The chain runs to 503 residues: MEEFKRYLELDRSQQHDFVYPLIFQEYIYALAHDHGLNRSIFLENTGYDNKSSLLIVKRLITQMYQRNHLIFCANDSNQNPFFGHNTNVYSQMLLEGFAVLVEIPFSLRLISSLKGKEIVKSHNLRSIHSIFPFLEDKFSHLNYVLDILIPHSIHLEVLVQTLRYWVKDVSSLHLLRFFLHEYRNWNSLITPKKSSFSFSKRNQRLFLFLYNSHVCEYESIFVFLRNQSSYLRSISSGTFLERIYFYGKIEHFVEVFTKDFKAILWLFKDPFMHYVRYQGKSLLASKGTSLLMNKWKYYLVNFWQCYFYMWSQPGRIHRNQLSNHSLDLLGYLSSVRLNPSIVRSQMLENSFLIGNAIKKFDTIVPIIPLIGSLSKAKFCNVLGHPISKPVWSDLSDSDIIDRFGRIYRNLSHYYSGSSKKMSLYRIKYILRLSXARTLARKHKSTVRAFLKRLGSELLEEFFTEEEQVFSLTFPKASFTSRGLYRRRIWYLDIIXINDLANH.

This sequence belongs to the intron maturase 2 family. MatK subfamily.

It localises to the plastid. Its subcellular location is the chloroplast. Its function is as follows. Usually encoded in the trnK tRNA gene intron. Probably assists in splicing its own and other chloroplast group II introns. The polypeptide is Maturase K (Diospyros kaki (Kaki persimmon)).